Here is a 241-residue protein sequence, read N- to C-terminus: Ribonuclease 3 (241 aa).

An RNase III domain is found at 8 to 137; the sequence is LTLLKNRLGI…LLGAVYLDQG (130 aa). Residue E50 coordinates Mg(2+). D54 is a catalytic residue. Residues D123 and E126 each contribute to the Mg(2+) site. E126 is a catalytic residue. Positions 164 to 233 constitute a DRBM domain; it reads DYKTELQELV…AKKALMKSDL (70 aa). Positions 214 to 241 are disordered; it reads RSKKEAEQQAAKKALMKSDLGSACNHKK.

Belongs to the ribonuclease III family. In terms of assembly, homodimer. Mg(2+) serves as cofactor.

Its subcellular location is the cytoplasm. It catalyses the reaction Endonucleolytic cleavage to 5'-phosphomonoester.. Functionally, digests double-stranded RNA. Involved in the processing of primary rRNA transcript to yield the immediate precursors to the large and small rRNAs (23S and 16S). Processes some mRNAs, and tRNAs when they are encoded in the rRNA operon. Processes pre-crRNA and tracrRNA of type II CRISPR loci if present in the organism. The chain is Ribonuclease 3 from Pelotomaculum thermopropionicum (strain DSM 13744 / JCM 10971 / SI).